Consider the following 429-residue polypeptide: 3-phosphoshikimate 1-carboxyvinyltransferase (429 aa).

3-phosphoshikimate contacts are provided by Lys-22, Ser-23, and Arg-27. Lys-22 serves as a coordination point for phosphoenolpyruvate. Phosphoenolpyruvate is bound by residues Gly-94 and Arg-122. 3-phosphoshikimate contacts are provided by Ser-167, Gln-169, Asp-315, and Lys-342. Residue Gln-169 participates in phosphoenolpyruvate binding. Asp-315 acts as the Proton acceptor in catalysis. Arg-346 and Arg-388 together coordinate phosphoenolpyruvate.

It belongs to the EPSP synthase family. In terms of assembly, monomer.

It is found in the cytoplasm. The enzyme catalyses 3-phosphoshikimate + phosphoenolpyruvate = 5-O-(1-carboxyvinyl)-3-phosphoshikimate + phosphate. It functions in the pathway metabolic intermediate biosynthesis; chorismate biosynthesis; chorismate from D-erythrose 4-phosphate and phosphoenolpyruvate: step 6/7. Catalyzes the transfer of the enolpyruvyl moiety of phosphoenolpyruvate (PEP) to the 5-hydroxyl of shikimate-3-phosphate (S3P) to produce enolpyruvyl shikimate-3-phosphate and inorganic phosphate. This chain is 3-phosphoshikimate 1-carboxyvinyltransferase, found in Citrifermentans bemidjiense (strain ATCC BAA-1014 / DSM 16622 / JCM 12645 / Bem) (Geobacter bemidjiensis).